We begin with the raw amino-acid sequence, 283 residues long: Bifunctional protein FolD (283 aa).

Residues 165–167, threonine 192, and valine 233 each bind NADP(+); that span reads GRG.

It belongs to the tetrahydrofolate dehydrogenase/cyclohydrolase family. As to quaternary structure, homodimer.

It catalyses the reaction (6R)-5,10-methylene-5,6,7,8-tetrahydrofolate + NADP(+) = (6R)-5,10-methenyltetrahydrofolate + NADPH. The catalysed reaction is (6R)-5,10-methenyltetrahydrofolate + H2O = (6R)-10-formyltetrahydrofolate + H(+). Its pathway is one-carbon metabolism; tetrahydrofolate interconversion. Functionally, catalyzes the oxidation of 5,10-methylenetetrahydrofolate to 5,10-methenyltetrahydrofolate and then the hydrolysis of 5,10-methenyltetrahydrofolate to 10-formyltetrahydrofolate. This chain is Bifunctional protein FolD, found in Thermobifida fusca (strain YX).